A 307-amino-acid chain; its full sequence is Porphobilinogen deaminase (307 aa).

An S-(dipyrrolylmethanemethyl)cysteine modification is found at C241.

This sequence belongs to the HMBS family. Monomer. Dipyrromethane serves as cofactor.

The enzyme catalyses 4 porphobilinogen + H2O = hydroxymethylbilane + 4 NH4(+). It functions in the pathway porphyrin-containing compound metabolism; protoporphyrin-IX biosynthesis; coproporphyrinogen-III from 5-aminolevulinate: step 2/4. Functionally, tetrapolymerization of the monopyrrole PBG into the hydroxymethylbilane pre-uroporphyrinogen in several discrete steps. The protein is Porphobilinogen deaminase of Macrococcus caseolyticus (strain JCSC5402) (Macrococcoides caseolyticum).